The following is an 89-amino-acid chain: Large ribosomal subunit protein bL27 (89 aa).

The disordered stretch occupies residues 1–21; that stretch reads MAHKKAGGSSRNGRDSESKRL.

The protein belongs to the bacterial ribosomal protein bL27 family.

The sequence is that of Large ribosomal subunit protein bL27 from Bartonella quintana (strain Toulouse) (Rochalimaea quintana).